Here is a 65-residue protein sequence, read N- to C-terminus: Weak toxin CM-10 (65 aa).

Cystine bridges form between C3–C24, C6–C11, C17–C42, C46–C57, and C58–C63.

The protein belongs to the three-finger toxin family. Ancestral subfamily. Orphan group II sub-subfamily. In terms of tissue distribution, expressed by the venom gland.

Its subcellular location is the secreted. Its function is as follows. Binds with low affinity to muscular (alpha-1-beta-1-delta-epsilon/CHRNA1-CHRNB1-CHRND-CHRNE) and very low affinity to neuronal (alpha-7/CHRNA7) nicotinic acetylcholine receptor (nAChR). The polypeptide is Weak toxin CM-10 (Naja nivea (Cape cobra)).